An 89-amino-acid chain; its full sequence is Glutamyl-tRNA(Gln) amidotransferase subunit C (89 aa).

It belongs to the GatC family. As to quaternary structure, heterotrimer of A, B and C subunits.

It carries out the reaction L-glutamyl-tRNA(Gln) + L-glutamine + ATP + H2O = L-glutaminyl-tRNA(Gln) + L-glutamate + ADP + phosphate + H(+). The enzyme catalyses L-aspartyl-tRNA(Asn) + L-glutamine + ATP + H2O = L-asparaginyl-tRNA(Asn) + L-glutamate + ADP + phosphate + 2 H(+). In terms of biological role, allows the formation of correctly charged Asn-tRNA(Asn) or Gln-tRNA(Gln) through the transamidation of misacylated Asp-tRNA(Asn) or Glu-tRNA(Gln) in organisms which lack either or both of asparaginyl-tRNA or glutaminyl-tRNA synthetases. The reaction takes place in the presence of glutamine and ATP through an activated phospho-Asp-tRNA(Asn) or phospho-Glu-tRNA(Gln). The sequence is that of Glutamyl-tRNA(Gln) amidotransferase subunit C from Thermus thermophilus (strain ATCC 27634 / DSM 579 / HB8).